Reading from the N-terminus, the 494-residue chain is Anthranilate synthase component 1 (494 aa).

Residues S52 and 274–276 (PYM) contribute to the L-tryptophan site. 309–310 (GT) contributes to the chorismate binding site. Residue E336 coordinates Mg(2+). Chorismate-binding positions include Y424, R444, 458–460 (GAG), and G460. E473 provides a ligand contact to Mg(2+).

This sequence belongs to the anthranilate synthase component I family. As to quaternary structure, heterotetramer consisting of two non-identical subunits: a beta subunit (TrpG) and a large alpha subunit (TrpE). Requires Mg(2+) as cofactor.

It carries out the reaction chorismate + L-glutamine = anthranilate + pyruvate + L-glutamate + H(+). It functions in the pathway amino-acid biosynthesis; L-tryptophan biosynthesis; L-tryptophan from chorismate: step 1/5. With respect to regulation, feedback inhibited by tryptophan. Functionally, part of a heterotetrameric complex that catalyzes the two-step biosynthesis of anthranilate, an intermediate in the biosynthesis of L-tryptophan. In the first step, the glutamine-binding beta subunit (TrpG) of anthranilate synthase (AS) provides the glutamine amidotransferase activity which generates ammonia as a substrate that, along with chorismate, is used in the second step, catalyzed by the large alpha subunit of AS (TrpE) to produce anthranilate. In the absence of TrpG, TrpE can synthesize anthranilate directly from chorismate and high concentrations of ammonia. In Aquifex aeolicus (strain VF5), this protein is Anthranilate synthase component 1 (trpE).